A 138-amino-acid polypeptide reads, in one-letter code: Transcription antitermination protein NusB (138 aa).

It belongs to the NusB family.

In terms of biological role, involved in transcription antitermination. Required for transcription of ribosomal RNA (rRNA) genes. Binds specifically to the boxA antiterminator sequence of the ribosomal RNA (rrn) operons. The chain is Transcription antitermination protein NusB from Desulforudis audaxviator (strain MP104C).